A 108-amino-acid chain; its full sequence is Putative transmembrane protein ORF108 (108 aa).

3 helical membrane passes run 11-31 (FIMG…SSII), 33-53 (IAMT…TVHF), and 69-89 (VGFL…LLII).

It is found in the host membrane. The protein is Putative transmembrane protein ORF108 of Acidianus hospitalis (AFV-1).